The following is a 658-amino-acid chain: Carnitine O-palmitoyltransferase 2, mitochondrial (658 aa).

The transit peptide at 1 to 26 (MARLLTSSSALRWGAVSSSQSVGRAY) directs the protein to the mitochondrion. Residues 27–179 (SSGSPDTEYV…GYLEPEIFHL (153 aa)) lie on the Mitochondrial matrix side of the membrane. The note=Mitochondrial inner membrane intramembrane region spans 180–209 (NPAKSDTLTFRKLIRFVPSSLSWYGAYMVN). Residues 210–658 (AYPLDMSQYF…FTVLQDKPIK (449 aa)) lie on the Mitochondrial matrix side of the membrane. The Proton acceptor role is filled by H373. 453–465 (GKELLKTQKLSPD) contacts CoA. Residues Y487, S489, and T500 each contribute to the (R)-carnitine site.

It belongs to the carnitine/choline acetyltransferase family.

The protein resides in the mitochondrion inner membrane. It carries out the reaction (R)-carnitine + hexadecanoyl-CoA = O-hexadecanoyl-(R)-carnitine + CoA. It catalyses the reaction octanoyl-CoA + (R)-carnitine = O-octanoyl-(R)-carnitine + CoA. The enzyme catalyses decanoyl-CoA + (R)-carnitine = O-decanoyl-(R)-carnitine + CoA. The catalysed reaction is dodecanoyl-CoA + (R)-carnitine = O-dodecanoyl-R-carnitine + CoA. It carries out the reaction tetradecanoyl-CoA + (R)-carnitine = O-tetradecanoyl-(R)-carnitine + CoA. It catalyses the reaction (R)-carnitine + octadecanoyl-CoA = O-octadecanoyl-(R)-carnitine + CoA. The enzyme catalyses eicosanoyl-CoA + (R)-carnitine = O-eicosanoyl-(R)-carnitine + CoA. The catalysed reaction is (9Z)-tetradecenoyl-CoA + (R)-carnitine = O-(9Z)-tetradecenoyl-(R)-carnitine + CoA. It carries out the reaction (5Z)-tetradecenoyl-CoA + (R)-carnitine = O-(5Z)-tetradecenoyl-(R)-carnitine + CoA. It catalyses the reaction (R)-carnitine + (9Z)-octadecenoyl-CoA = O-(9Z)-octadecenoyl-(R)-carnitine + CoA. The enzyme catalyses 4,8-dimethylnonanoyl-CoA + (R)-carnitine = O-4,8-dimethylnonanoyl-(R)-carnitine + CoA. It functions in the pathway lipid metabolism; fatty acid beta-oxidation. Involved in the intramitochondrial synthesis of acylcarnitines from accumulated acyl-CoA metabolites. Reconverts acylcarnitines back into the respective acyl-CoA esters that can then undergo beta-oxidation, an essential step for the mitochondrial uptake of long-chain fatty acids and their subsequent beta-oxidation in the mitochondrion. Active with medium (C8-C12) and long-chain (C14-C18) acyl-CoA esters. The sequence is that of Carnitine O-palmitoyltransferase 2, mitochondrial (cpt2) from Xenopus tropicalis (Western clawed frog).